Consider the following 389-residue polypeptide: Transcription factor TGAL10 (389 aa).

The disordered stretch occupies residues 80–110 (DDQDNAAALQESPRHASDSFEQEASKPRDKI). The segment covering 91–110 (SPRHASDSFEQEASKPRDKI) has biased composition (basic and acidic residues). The 45-residue stretch at 107-151 (RDKIQRRLAQNREAARKSRLRKKAYIQNLETSRMKLAHLEQEITR) folds into the bZIP domain. Positions 109-129 (KIQRRLAQNREAARKSRLRKK) are basic motif. A leucine-zipper region spans residues 135-149 (LETSRMKLAHLEQEI). Positions 176–389 (VVTFEVEYAQ…LHVRRRAELG (214 aa)) constitute a DOG1 domain. 2 disordered regions span residues 320 to 345 (TSCDASPPPPPPEEEEPSSSAAGDGG) and 370 to 389 (HRRSPPPTSHLHVRRRAELG). The segment covering 380–389 (LHVRRRAELG) has biased composition (basic residues).

The protein belongs to the bZIP family.

It is found in the nucleus. Functionally, transcriptional regulator involved in defense response. The protein is Transcription factor TGAL10 of Oryza sativa subsp. japonica (Rice).